Consider the following 95-residue polypeptide: Embryonic abundant protein 1 (95 aa).

The span at 1–10 (MASGQQQQGR) shows a compositional bias: polar residues. A disordered region spans residues 1–95 (MASGQQQQGR…IDESKYKTKS (95 aa)). Basic and acidic residues-rich tracts occupy residues 40-64 (AEGR…EMGR) and 75-95 (GGER…KTKS).

It belongs to the small hydrophilic plant seed protein family. As to expression, expressed in dry seeds and immature embryos.

Its function is as follows. Em protein may act as a cytoplasm protectant during desiccation. The protein is Embryonic abundant protein 1 (EMP1) of Oryza sativa subsp. japonica (Rice).